A 189-amino-acid polypeptide reads, in one-letter code: Glycerol-3-phosphate acyltransferase (189 aa).

The next 5 membrane-spanning stretches (helical) occupy residues 1–21 (MFWL…AILL), 51–71 (LAVL…LIAH), 77–97 (LQQQ…PLYF), 111–131 (MLLG…ALTF), and 151–171 (LLAW…LLIV).

The protein belongs to the PlsY family. Probably interacts with PlsX.

The protein resides in the cell inner membrane. It catalyses the reaction an acyl phosphate + sn-glycerol 3-phosphate = a 1-acyl-sn-glycero-3-phosphate + phosphate. It functions in the pathway lipid metabolism; phospholipid metabolism. Functionally, catalyzes the transfer of an acyl group from acyl-phosphate (acyl-PO(4)) to glycerol-3-phosphate (G3P) to form lysophosphatidic acid (LPA). This enzyme utilizes acyl-phosphate as fatty acyl donor, but not acyl-CoA or acyl-ACP. The polypeptide is Glycerol-3-phosphate acyltransferase (Pseudomonas fluorescens (strain ATCC BAA-477 / NRRL B-23932 / Pf-5)).